Reading from the N-terminus, the 242-residue chain is Guanylate kinase (242 aa).

Positions 22-200 constitute a Guanylate kinase-like domain; that stretch reads GLLIVMTGAS…AVRELQAVQR (179 aa). 29–36 contacts ATP; the sequence is GASGVGKG.

Belongs to the guanylate kinase family.

The protein localises to the cytoplasm. The catalysed reaction is GMP + ATP = GDP + ADP. Functionally, essential for recycling GMP and indirectly, cGMP. The polypeptide is Guanylate kinase (Deinococcus geothermalis (strain DSM 11300 / CIP 105573 / AG-3a)).